The sequence spans 112 residues: UPF0102 protein Cla_1413 (112 aa).

It belongs to the UPF0102 family.

The sequence is that of UPF0102 protein Cla_1413 from Campylobacter lari (strain RM2100 / D67 / ATCC BAA-1060).